Here is a 964-residue protein sequence, read N- to C-terminus: Activator of stress genes 1 (964 aa).

Positions 21–47 (CDECRKKKVKCDGQQPCIHCTVYSYEC) form a DNA-binding region, zn(2)-C6 fungal-type. Residues 104–125 (ASTIPASNNPSKPRKYKTKSTR) are disordered. Position 166 is a phosphoserine; by ATM or ATR (Ser-166). At Ser-186 the chain carries Phosphoserine. Polar residues-rich tracts occupy residues 190 to 201 (PVLSSNSKNSTP), 209 to 225 (KSDSNSASSNREQDSVD), and 733 to 759 (NNTPISENPLNEAQQQDQVSQGTTNMS). Disordered stretches follow at residues 190-225 (PVLSSNSKNSTPDEFLPNMKSDSNSASSNREQDSVD), 733-764 (NNTPISENPLNEAQQQDQVSQGTTNMSNERDP), and 800-900 (NSAF…SPSY). Positions 800-896 (NSAFDFSSSK…NDFGIKIDNN (97 aa)) are enriched in low complexity. Ser-963 carries the phosphoserine modification.

It belongs to the ASG1 family.

Its subcellular location is the nucleus. Functionally, probable transcription factor involved in the stress response. This Saccharomyces cerevisiae (strain ATCC 204508 / S288c) (Baker's yeast) protein is Activator of stress genes 1 (ASG1).